The primary structure comprises 671 residues: Vinexin (671 aa).

Glutamine 2 is modified (N-acetylalanine). Position 6 is a phosphoserine (arginine 6). Disordered regions lie at residues 46–111, 166–215, 249–268, 295–324, and 337–383; these read LNFQ…TKDS, TFEE…RPGA, LETG…EKPS, TRLP…AWSS, and SLSP…KKRK. Positions 88–108 are enriched in polar residues; that stretch reads PSASTKIPASQHTQNWSATWT. Positions 115–187 constitute a SoHo domain; that stretch reads DKRWVKYEGI…GAQQRPAHRP (73 aa). Serine 348 is subject to Phosphoserine. The span at 359–368 shows a compositional bias: polar residues; sequence PSSTRDPSAS. SH3 domains follow at residues 380–439 and 454–515; these read KKRK…VLPA and LEYG…VSRE. A binds to vinculin region spans residues 380–515; it reads KKRKAARLKF…PASYVQVSRE (136 aa). Serine 395 carries the phosphoserine modification. The segment at 519–611 is disordered; that stretch reads RLCDDGPQLP…LGTSSPNTSQ (93 aa). Serine 530 is subject to Phosphoserine; by MAPK1. A compositionally biased stretch (low complexity) spans 535 to 553; the sequence is AAARSARHPSSPSALRSPA. 5 positions are modified to phosphoserine: serine 544, serine 545, serine 547, serine 551, and serine 563. Residues 560 to 584 are compositionally biased toward polar residues; that stretch reads GQTSPRRTGFSFPTQEPRPQTQNLG. The 60-residue stretch at 612–671 folds into the SH3 3 domain; that stretch reads IHWTPYRAMYQYRPQNEDELELREGDRVDVMQQCDDGWFVGVSRRTQKFGTFPGNYVAPV. Residues 612–671 form a binds to SOS region; sequence IHWTPYRAMYQYRPQNEDELELREGDRVDVMQQCDDGWFVGVSRRTQKFGTFPGNYVAPV.

In terms of assembly, interacts with DLG5 through its third SH3 domain. Interacts with vinculin by the first two SH3 domains and the proline rich region of vinculin. Binds to SOS (guanine nucleotide exchange factor of RAS and RAC), through its third SH3 domain. The formation of this complex is down-regulated by phosphorylation of SOS. Interacts with INPPL1/SHIP2, SAFB2, SOCS7 and SRCIN1. Interacts with FASLG. Interacts with MAPK1/ERK2. Post-translationally, phosphorylated at Ser-530 by MAPK1/ERK2 during cell spreading. In terms of tissue distribution, both isoforms are expressed in different tissues like heart, placenta, brain, skeletal muscle and pancreas. Isoform beta is especially found in liver.

The protein localises to the cell junction. It localises to the cytoplasm. The protein resides in the cytoskeleton. It is found in the nucleus. In terms of biological role, vinexin alpha isoform promotes up-regulation of actin stress fiber formation. Vinexin beta isoform plays a role in cell spreading and enhances the activation of JNK/SAPK in response to EGF stimulation by using its third SH3 domain. In Homo sapiens (Human), this protein is Vinexin (SORBS3).